A 600-amino-acid chain; its full sequence is MTNLTRFSVAPLHTMTRRLADVASGRVAPDLVITGARVLSTYSERILRDRELWITGGRVAAVKPAGAHKALPSGFTIYDAAGGIIAPGLVDPHIHIESSMVTACAYAEAALLNGTTTIFCDSHEIGNVMDTAGVEAMLEDARQAPLSIFLTVPSTVPATSAALETAGGDLTPDKIAGLFDRWPEAVALGEKMDFVPVCMGDERSHAILAAALQRGRPVSGHVYGREFVAAYAASGVTDTHEAIDRDIADDLLDAGVWIFLRGGPPTTPWHSLPQAIRTITELGASHKRTAVCTDDRDADDLMLFGLDWVVREAVKAGMSPEQAWSMGSLHGATRFAMDGEIGGLGGGRRADLVLLDDGLKPQSTWYGGELVVDQGKITSLLDQALSQRYQYPKAAYATVKLPAQMKLTPELPAKACTVNAIKTALPGITLIHEKVAIKPANDWDTLFARHGLCFVAVIERHGKSAGNVAHGLLKDFGLKRGAVASSVGHDSHNIIVAGTNEADMQTAVAAIGAQQGGVCVVADGKVRAMVPLPIAGLLSDKRVTAVAEEVKLLKKEWAEAGCTIPYMGFNLIPLSVIPEIRITDKGLVLVPQMELAPLFE.

The protein belongs to the metallo-dependent hydrolases superfamily. Adenine deaminase family. The cofactor is Mn(2+).

It catalyses the reaction adenine + H2O + H(+) = hypoxanthine + NH4(+). This Bradyrhizobium sp. (strain ORS 278) protein is Adenine deaminase 2.